The primary structure comprises 135 residues: MPTVNQLIKEGREKIKKKSKAPALQGNPQKRGVCVRVYTVTPKKPNSALRKVARVRLSNGIEVTCYIPGEGHNLQEHSIVLVRGGRVKDLPGVRYKIIRGALDTAGVANRRQSRSKYGAKRPKAGAAQATKGGKK.

3-methylthioaspartic acid is present on aspartate 89. The disordered stretch occupies residues 106–135 (GVANRRQSRSKYGAKRPKAGAAQATKGGKK). Positions 111–123 (RQSRSKYGAKRPK) are enriched in basic residues. Residues 124-135 (AGAAQATKGGKK) are compositionally biased toward low complexity.

This sequence belongs to the universal ribosomal protein uS12 family. In terms of assembly, part of the 30S ribosomal subunit. Contacts proteins S8 and S17. May interact with IF1 in the 30S initiation complex.

In terms of biological role, with S4 and S5 plays an important role in translational accuracy. Its function is as follows. Interacts with and stabilizes bases of the 16S rRNA that are involved in tRNA selection in the A site and with the mRNA backbone. Located at the interface of the 30S and 50S subunits, it traverses the body of the 30S subunit contacting proteins on the other side and probably holding the rRNA structure together. The combined cluster of proteins S8, S12 and S17 appears to hold together the shoulder and platform of the 30S subunit. The sequence is that of Small ribosomal subunit protein uS12 from Hydrogenobaculum sp. (strain Y04AAS1).